A 438-amino-acid polypeptide reads, in one-letter code: Polycomb protein eed-A (438 aa).

Positions 1–67 are disordered; that stretch reads MSEASGRAAG…NAPGRKAWGK (67 aa). Residues 40–57 are compositionally biased toward polar residues; it reads SIESGTNTERPDTPTNAA. 7 WD repeats span residues 88 to 131, 139 to 182, 185 to 225, 231 to 270, 301 to 338, 356 to 396, and 405 to 438; these read DHNQ…DIRL, DADE…CIKH, GHGN…LVAI, GHRDEVLSADYDLLGEKIMSCGMDHSLKLWRINSLRMKTA, IHRNYVDCVRWLGDLILSKSCENAIVCWKPGKMEDDID, SQCD…PHKA, and KCASAVRQTSFSRDSSILVAVCDDATIWRWDRLR.

Belongs to the WD repeat ESC family. As to quaternary structure, component of the prc2/eed-ezh2 complex. Interacts with yy1. Can interact with ezh2, hdac1 and taf9.

It is found in the nucleus. Functionally, polycomb group (PcG) protein. Component of the prc2/eed-ezh2 complex, which methylates 'Lys-9' and 'Lys-27' of histone H3, leading to transcriptional repression of the affected target gene. The protein is Polycomb protein eed-A (eed-a) of Xenopus laevis (African clawed frog).